A 581-amino-acid polypeptide reads, in one-letter code: Putative aluminum-activated malate transporter 3 (581 aa).

6 helical membrane passes run 98-118, 122-142, 148-164, 167-187, 201-218, and 231-251; these read MGLALTLTSILIFFKIPGLEL, YLWAILTVVVIFEFSIGATFS, GLGTLSAGGLALGMSWI, MTGNWADVFNAASIFVVAFFA, YGFRVFLLTYCYVIVSGY, and FLLIALGASVGLIVNTCIYPI.

Belongs to the aromatic acid exporter (TC 2.A.85) family.

The protein localises to the membrane. Malate transporter. This chain is Putative aluminum-activated malate transporter 3 (ALMT3), found in Arabidopsis thaliana (Mouse-ear cress).